The primary structure comprises 158 residues: Transcriptional repressor NrdR (158 aa).

A zinc finger spans residues 3–34 (CPSCQNTDSRVLESRAADAGRSVRRRRECLHC). The region spanning 49–139 (ITVLKRNGNR…VYRHFRGIND (91 aa)) is the ATP-cone domain.

This sequence belongs to the NrdR family. Requires Zn(2+) as cofactor.

Functionally, negatively regulates transcription of bacterial ribonucleotide reductase nrd genes and operons by binding to NrdR-boxes. The polypeptide is Transcriptional repressor NrdR (Prochlorococcus marinus (strain MIT 9303)).